Reading from the N-terminus, the 255-residue chain is Aliphatic sulfonates import ATP-binding protein SsuB (255 aa).

Positions 12 to 233 constitute an ABC transporter domain; that stretch reads LLLNAVSKHY…RLGSVRLAEL (222 aa). Residue 44–51 coordinates ATP; that stretch reads GRSGGGKS.

This sequence belongs to the ABC transporter superfamily. Aliphatic sulfonates importer (TC 3.A.1.17.2) family. The complex is composed of two ATP-binding proteins (SsuB), two transmembrane proteins (SsuC) and a solute-binding protein (SsuA).

The protein resides in the cell inner membrane. The enzyme catalyses ATP + H2O + aliphatic sulfonate-[sulfonate-binding protein]Side 1 = ADP + phosphate + aliphatic sulfonateSide 2 + [sulfonate-binding protein]Side 1.. Its function is as follows. Part of the ABC transporter complex SsuABC involved in aliphatic sulfonates import. Responsible for energy coupling to the transport system. The chain is Aliphatic sulfonates import ATP-binding protein SsuB from Escherichia coli (strain K12).